Reading from the N-terminus, the 153-residue chain is Large ribosomal subunit protein uL15 (153 aa).

A disordered region spans residues 1-42 (MRLNTIKPGMGSTKPRRRVGRGIGSGLGKTCGRGHKGQKSRA). Residues 21–31 (RGIGSGLGKTC) are compositionally biased toward gly residues.

Belongs to the universal ribosomal protein uL15 family. As to quaternary structure, part of the 50S ribosomal subunit.

Functionally, binds to the 23S rRNA. This is Large ribosomal subunit protein uL15 from Nitrosomonas eutropha (strain DSM 101675 / C91 / Nm57).